Consider the following 355-residue polypeptide: Sorbitol dehydrogenase (355 aa).

N-acetylalanine is present on Ala-2. Cys-43 contributes to the Zn(2+) binding site. Tyr-49 contributes to the substrate binding site. Positions 68 and 69 each coordinate Zn(2+). Glu-154 is a substrate binding site. NAD(+)-binding positions include Ile-182, Asp-202, Arg-207, 271–273 (VGL), and 295–297 (IFR). 2 residues coordinate substrate: Arg-297 and Tyr-298.

This sequence belongs to the zinc-containing alcohol dehydrogenase family. Homotetramer. It depends on Zn(2+) as a cofactor. Expressed in liver.

The protein localises to the mitochondrion membrane. Its subcellular location is the cell projection. The protein resides in the cilium. It localises to the flagellum. The enzyme catalyses keto-D-fructose + NADH + H(+) = D-sorbitol + NAD(+). Its function is as follows. Polyol dehydrogenase that catalyzes the reversible NAD(+)-dependent oxidation of various sugar alcohols. Is active with D-sorbitol (D-glucitol) as substrate, leading to the C2-oxidized product D-fructose. Is a key enzyme in the polyol pathway that interconverts glucose and fructose via sorbitol, which constitutes an important alternate route for glucose metabolism. The chain is Sorbitol dehydrogenase (SORD) from Gallus gallus (Chicken).